A 112-amino-acid chain; its full sequence is Large ribosomal subunit protein eL30 (112 aa).

Belongs to the eukaryotic ribosomal protein eL30 family.

This is Large ribosomal subunit protein eL30 (RPL30) from Euphorbia esula (Leafy spurge).